A 538-amino-acid polypeptide reads, in one-letter code: UNC93-like protein (538 aa).

N-linked (GlcNAc...) asparagine glycosylation occurs at asparagine 45. 5 helical membrane passes run 46–66, 80–100, 105–125, 128–148, and 170–190; these read ISII…TANL, SLSA…TLII, VKWT…FQLF, FYTL…MWAS, and AIIV…ELWG. N-linked (GlcNAc...) asparagine glycosylation occurs at asparagine 210. The next 7 helical transmembrane spans lie at 244 to 264, 305 to 325, 338 to 358, 366 to 386, 394 to 414, 435 to 455, and 457 to 477; these read IFEI…IIAF, LLIP…ADFT, IGFV…LFGS, TPII…ELFW, IIFY…QTQI, LWES…CTQM, and LYIL…VEIL.

Belongs to the unc-93 family.

Its subcellular location is the membrane. This chain is UNC93-like protein, found in Drosophila melanogaster (Fruit fly).